A 550-amino-acid chain; its full sequence is Neuronal acetylcholine receptor subunit alpha-9-II (550 aa).

The N-terminal stretch at 1 to 20 is a signal peptide; sequence MRKMVPVVCFATMLLQVAHS. Topologically, residues 21-233 are extracellular; the sequence is AQGRYAQQLL…YTVLLQRRSS (213 aa). The N-linked (GlcNAc...) asparagine glycan is linked to asparagine 52. Cysteine 150 and cysteine 164 form a disulfide bridge. Residue asparagine 165 is glycosylated (N-linked (GlcNAc...) asparagine). Cysteine 214 and cysteine 215 are oxidised to a cystine. Transmembrane regions (helical) follow at residues 234–254, 264–284, and 298–318; these read FYIF…PLGF, VSLG…VAES, and YIAT…IMNI. Over 319–528 the chain is Cytoplasmic; that stretch reads HFCGAEAKPV…WKRVAKVMDR (210 aa). The tract at residues 357-439 is disordered; it reads TSSSSSSSSS…HLSSSKYEGF (83 aa). Over residues 358 to 367 the composition is skewed to low complexity; the sequence is SSSSSSSSSS. The span at 413–422 shows a compositional bias: basic residues; the sequence is RHPKPRHQHH. A helical transmembrane segment spans residues 529–549; that stretch reads FFMWIFFIMVFLMSILIIGKA.

Belongs to the ligand-gated ion channel (TC 1.A.9) family. Acetylcholine receptor (TC 1.A.9.1) subfamily. In terms of tissue distribution, expressed in the brain, liver, olfactory mucosa, pituitary gland and hair cells of the saccule.

The protein resides in the postsynaptic cell membrane. It localises to the cell membrane. The protein is Neuronal acetylcholine receptor subunit alpha-9-II of Oncorhynchus mykiss (Rainbow trout).